A 261-amino-acid chain; its full sequence is MPKHILIFDSGIGGLSVYKEIKYQLPLAKYIYAFDNAAFPYGELTESVLIERTTHIISELCSQFPIDIVVIACNTASTVVLPSLRDKLDIPVVGVVPAIKPAALVSNKIGLLATPATVKRSYTYDLIKSFAPISDVQLLGSTRLVEMAEEKMIGIDVDMRAKRDLSPWQNKVDTIVLGCTHFPFLKNEIKKALGNKILLIDSGEAIARRVKQLLNGDGVESAVLFEGEVFCSAPSIKEEALNHTFKELNFSSLQCLGYPKF.

Substrate-binding positions include 9 to 10 (DS) and 41 to 42 (YG). Cysteine 73 serves as the catalytic Proton donor/acceptor. 74–75 (NT) provides a ligand contact to substrate. Catalysis depends on cysteine 179, which acts as the Proton donor/acceptor. 180–181 (TH) contacts substrate.

It belongs to the aspartate/glutamate racemases family.

The catalysed reaction is L-glutamate = D-glutamate. It participates in cell wall biogenesis; peptidoglycan biosynthesis. Its function is as follows. Provides the (R)-glutamate required for cell wall biosynthesis. In Aliivibrio fischeri (strain MJ11) (Vibrio fischeri), this protein is Glutamate racemase.